The chain runs to 535 residues: MASLVAYDDSDSETEADPARSGDAAGQISDASGMSRPSGMGFASSTVGVTKEGAQHTGNSPNEDPGMQRLPLARLWRSDPGSCPSQRLQWPSKEPDTTFPPSEPPRPSLWMSRAPVGHVPLAAACLKPLKPAWDVLKPSHDQSTFESTAGNASSSQRKRGEDCVLPYIPKRLRQLQALNPEAGGGKDGEPPGPPAGCAPAPLCVAPTVSEFIQPYLNSQYRETTVPKKVLFHLRGHRGPVNSIQWCPVFCKSHMLLSASMDKTFKVWNAVDSGHCLQTYSVHSEAVRAARWSPCGRRILSGGFDFALHLTDLETGTQVFSGQSDFRVTTLKFHPKDHNVFLCGGFSSEIKAWDMRTGKVVKGYKATIQQTLDILFLQEGSEFLSSTDASTRDSADRTIIAWDFRTAAKISNQIFHERYTCPSLALHPREPVFLAQTNGNYLALFSSVWPYRMSRRRRYEGHKVEGYAVGCECSPCGDLLVTGSADGRVLMFSFRTASRACTLQGHTQACLGTTYHPVLPSVLGTCSWGGDIKIWH.

2 disordered regions span residues 1–108 (MASL…PRPS) and 141–160 (DQST…RKRG). The span at 141-155 (DQSTFESTAGNASSS) shows a compositional bias: polar residues. 7 WD repeats span residues 235-277 (GHRG…HCLQ), 281-320 (VHSE…QVFS), 321-362 (GQSD…VVKG), 365-411 (ATIQ…KISN), 415-454 (HERY…RMSR), 460-501 (GHKV…RACT), and 504-535 (GHTQ…KIWH).

In Mus musculus (Mouse), this protein is WD repeat-containing protein 25 (Wdr25).